A 127-amino-acid polypeptide reads, in one-letter code: Large ribosomal subunit protein bL12 (127 aa).

It belongs to the bacterial ribosomal protein bL12 family. Homodimer. Part of the ribosomal stalk of the 50S ribosomal subunit. Forms a multimeric L10(L12)X complex, where L10 forms an elongated spine to which 2 to 4 L12 dimers bind in a sequential fashion. Binds GTP-bound translation factors.

Forms part of the ribosomal stalk which helps the ribosome interact with GTP-bound translation factors. Is thus essential for accurate translation. This chain is Large ribosomal subunit protein bL12, found in Bordetella bronchiseptica (strain ATCC BAA-588 / NCTC 13252 / RB50) (Alcaligenes bronchisepticus).